A 137-amino-acid chain; its full sequence is MLQPKRTKFRKVQKGRNRGLAHRGSKVSFGEYGLKATGRGRITARQIEAGRRAITRHVKRGGKIWIRVFPDKPITEKPLEVRMGKGKGSVEYWVAQIQPGKVLYEIEGVSEELAREAFDLAAQKFPVSTTFVKRTVM.

Residues 1 to 22 (MLQPKRTKFRKVQKGRNRGLAH) are disordered.

This sequence belongs to the universal ribosomal protein uL16 family. As to quaternary structure, part of the 50S ribosomal subunit.

In terms of biological role, binds 23S rRNA and is also seen to make contacts with the A and possibly P site tRNAs. In Chromohalobacter salexigens (strain ATCC BAA-138 / DSM 3043 / CIP 106854 / NCIMB 13768 / 1H11), this protein is Large ribosomal subunit protein uL16.